The chain runs to 155 residues: Large ribosomal subunit protein uL13 (155 aa).

The protein belongs to the universal ribosomal protein uL13 family. In terms of assembly, part of the 50S ribosomal subunit.

Its function is as follows. This protein is one of the early assembly proteins of the 50S ribosomal subunit, although it is not seen to bind rRNA by itself. It is important during the early stages of 50S assembly. This Rickettsia rickettsii (strain Iowa) protein is Large ribosomal subunit protein uL13.